Consider the following 363-residue polypeptide: Protein-arginine kinase (363 aa).

A Phosphagen kinase C-terminal domain is found at 24–254 (IVLSSRIRLA…AQLIEQERSA (231 aa)). ATP is bound by residues 27–31 (SSRIR), His92, Arg125, 176–180 (RASVM), and 207–212 (RGIYGE). The RDXXRA motif of the pArg binding pocket involved in allosteric regulation motif lies at 337-342 (RDIKRA).

It belongs to the ATP:guanido phosphotransferase family.

The enzyme catalyses L-arginyl-[protein] + ATP = N(omega)-phospho-L-arginyl-[protein] + ADP + H(+). Appears to be allosterically activated by the binding of pArg-containing polypeptides to the pArg-binding pocket localized in the C-terminal domain of McsB. Catalyzes the specific phosphorylation of arginine residues in a large number of proteins. Is part of the bacterial stress response system. Protein arginine phosphorylation has a physiologically important role and is involved in the regulation of many critical cellular processes, such as protein homeostasis, motility, competence, and stringent and stress responses, by regulating gene expression and protein activity. This Bacillus pumilus (strain SAFR-032) protein is Protein-arginine kinase.